The following is a 228-amino-acid chain: Prolactin-2A1 (228 aa).

A signal peptide spans M1–A28. 2 cysteine pairs are disulfide-bonded: C87/C203 and C220/C228.

It belongs to the somatotropin/prolactin family. As to expression, expressed specifically in the placenta. Expression restricted to the junctional zone of the chorioallantoic placenta.

The protein resides in the secreted. This chain is Prolactin-2A1 (Prl2a1), found in Mus musculus (Mouse).